The primary structure comprises 137 residues: Small ribosomal subunit protein uS12 (137 aa).

Residues 1-57 are disordered; it reads MPTINQLVRKPRKSKVEKSKSPALNVGYNSLKRVPTNESAPQKRGVATRVGTMTPKK. Position 102 is a 3-methylthioaspartic acid (Asp-102).

It belongs to the universal ribosomal protein uS12 family. As to quaternary structure, part of the 30S ribosomal subunit. Contacts proteins S8 and S17. May interact with IF1 in the 30S initiation complex.

Functionally, with S4 and S5 plays an important role in translational accuracy. In terms of biological role, interacts with and stabilizes bases of the 16S rRNA that are involved in tRNA selection in the A site and with the mRNA backbone. Located at the interface of the 30S and 50S subunits, it traverses the body of the 30S subunit contacting proteins on the other side and probably holding the rRNA structure together. The combined cluster of proteins S8, S12 and S17 appears to hold together the shoulder and platform of the 30S subunit. The protein is Small ribosomal subunit protein uS12 of Streptococcus gordonii (strain Challis / ATCC 35105 / BCRC 15272 / CH1 / DL1 / V288).